We begin with the raw amino-acid sequence, 464 residues long: ATP synthase subunit beta (464 aa).

152–159 lines the ATP pocket; it reads GGAGVGKT.

Belongs to the ATPase alpha/beta chains family. In terms of assembly, F-type ATPases have 2 components, CF(1) - the catalytic core - and CF(0) - the membrane proton channel. CF(1) has five subunits: alpha(3), beta(3), gamma(1), delta(1), epsilon(1). CF(0) has three main subunits: a(1), b(2) and c(9-12). The alpha and beta chains form an alternating ring which encloses part of the gamma chain. CF(1) is attached to CF(0) by a central stalk formed by the gamma and epsilon chains, while a peripheral stalk is formed by the delta and b chains.

The protein resides in the cell inner membrane. It carries out the reaction ATP + H2O + 4 H(+)(in) = ADP + phosphate + 5 H(+)(out). In terms of biological role, produces ATP from ADP in the presence of a proton gradient across the membrane. The catalytic sites are hosted primarily by the beta subunits. The chain is ATP synthase subunit beta from Aliarcobacter butzleri (strain RM4018) (Arcobacter butzleri).